An 88-amino-acid polypeptide reads, in one-letter code: Small ribosomal subunit protein uS17 (88 aa).

This sequence belongs to the universal ribosomal protein uS17 family. Part of the 30S ribosomal subunit.

Its function is as follows. One of the primary rRNA binding proteins, it binds specifically to the 5'-end of 16S ribosomal RNA. The sequence is that of Small ribosomal subunit protein uS17 from Prochlorococcus marinus (strain MIT 9215).